The following is a 365-amino-acid chain: Endophilin-B1 (365 aa).

Met-1 bears the N-acetylmethionine mark. Positions 1 to 30 (MNIMDFNVKKLAADAGTFLSRAVQFTEEKL) are membrane-binding amphipathic helix. Residues 1-37 (MNIMDFNVKKLAADAGTFLSRAVQFTEEKLGQAEKTE) are required for membrane binding. In terms of domain architecture, BAR spans 27 to 261 (EEKLGQAEKT…LGSFPSNYLS (235 aa)). Position 145 is a phosphothreonine; by CDK5 (Thr-145). The stretch at 155 to 186 (YKTIAKERKLLQNKRLDLDAAKTRLKKAKAAE) forms a coiled coil. The SH3 domain maps to 305 to 365 (SNNRKARVLY…VPITYLELLN (61 aa)).

The protein belongs to the endophilin family. In terms of assembly, homodimer, and heterodimer with SH3GLB2. Binds BAX; induction of apoptosis augments BAX binding. Binds DNM1, HTT, AMPH, BIN1 and ARFGAP1. Interacts with UVRAG; UVRAG bridges the interaction to BECN1 indicative for an association with the PI3K complex II (PI3KC3-C2). Isoform 3 interacts with PPP1CC; this interaction leads to the inhibition of phosphatase activity. In terms of processing, phosphorylated at Thr-145 by CDK5; this phosphorylation is required for autophagy induction in starved neurons and facilitates homodimerization. As to expression, isoform 1 is widely expressed. Isoform 2 is brain-specific. Isoform 3 is predominantly expressed in testis, but it is also detected in liver and, at much lower levels, in skin, stomach and ovary.

It localises to the cytoplasm. The protein resides in the golgi apparatus membrane. Its subcellular location is the mitochondrion outer membrane. The protein localises to the cytoplasmic vesicle. It is found in the autophagosome membrane. It localises to the midbody. In terms of biological role, may be required for normal outer mitochondrial membrane dynamics. Required for coatomer-mediated retrograde transport in certain cells. May recruit other proteins to membranes with high curvature. May promote membrane fusion. Involved in activation of caspase-dependent apoptosis by promoting BAX/BAK1 activation. Isoform 1 acts proapoptotic in fibroblasts. Involved in caspase-independent apoptosis during nutrition starvation and involved in the regulation of autophagy. Activates lipid kinase activity of PIK3C3 during autophagy probably by associating with the PI3K complex II (PI3KC3-C2). Associated with PI3KC3-C2 during autophagy may regulate the trafficking of ATG9A from the Golgi complex to the peripheral cytoplasm for the formation of autophagosomes by inducing Golgi membrane tubulation and fragmentation. Involved in regulation of degradative endocytic trafficking and cytokinesis, probably in the context of PI3KC3-C2. Isoform 2 acts antiapoptotic in neuronal cells; involved in maintenance of mitochondrial morphology and promotes neuronal viability. This is Endophilin-B1 (Sh3glb1) from Mus musculus (Mouse).